The chain runs to 331 residues: Phosphoenolpyruvate transferase (331 aa).

Residue Asp63 coordinates 7,8-didemethyl-8-hydroxy-5-deazariboflavin.

It belongs to the CofD family. As to quaternary structure, homodimer. Mg(2+) serves as cofactor.

It carries out the reaction enolpyruvoyl-2-diphospho-5'-guanosine + 7,8-didemethyl-8-hydroxy-5-deazariboflavin = dehydro coenzyme F420-0 + GMP + H(+). It functions in the pathway cofactor biosynthesis; coenzyme F420 biosynthesis. Catalyzes the transfer of the phosphoenolpyruvate moiety from enoylpyruvoyl-2-diphospho-5'-guanosine (EPPG) to 7,8-didemethyl-8-hydroxy-5-deazariboflavin (FO) with the formation of dehydro coenzyme F420-0 and GMP. This is Phosphoenolpyruvate transferase from Mycobacterium sp. (strain JLS).